The primary structure comprises 247 residues: Probable phosphatase Shew_1420 (247 aa).

His-8, His-10, His-16, His-41, Glu-74, His-102, His-132, Asp-193, and His-195 together coordinate Zn(2+).

The protein belongs to the PHP family. Requires Zn(2+) as cofactor.

The protein is Probable phosphatase Shew_1420 of Shewanella loihica (strain ATCC BAA-1088 / PV-4).